A 285-amino-acid chain; its full sequence is Polyamine aminopropyltransferase (285 aa).

Residues 5-241 (DNWYIEHFQP…GWWSVTMASK (237 aa)) enclose the PABS domain. Gln35 contributes to the S-methyl-5'-thioadenosine binding site. Spermidine-binding residues include His66 and Asp90. S-methyl-5'-thioadenosine contacts are provided by residues Asp110 and 141–142 (DG). Asp160 (proton acceptor) is an active-site residue. Spermidine is bound at residue 160–163 (DSTD). Pro167 is a binding site for S-methyl-5'-thioadenosine.

Belongs to the spermidine/spermine synthase family. Homodimer or homotetramer.

The protein localises to the cytoplasm. The enzyme catalyses S-adenosyl 3-(methylsulfanyl)propylamine + putrescine = S-methyl-5'-thioadenosine + spermidine + H(+). It functions in the pathway amine and polyamine biosynthesis; spermidine biosynthesis; spermidine from putrescine: step 1/1. Functionally, catalyzes the irreversible transfer of a propylamine group from the amino donor S-adenosylmethioninamine (decarboxy-AdoMet) to putrescine (1,4-diaminobutane) to yield spermidine. This chain is Polyamine aminopropyltransferase, found in Xanthomonas campestris pv. campestris (strain 8004).